The sequence spans 865 residues: MALQTPMMKQYLEIKAQYKDAFLFFRLGDFYELFLDDAVKAAQELEITLTGRGKGEERIPMCGVPYHSADHYISRLLEKGYKIAICEQVEDPKNAKGVVKREVIKLITPGTIMDGKLIVEKENNFLCAVTRFEDQSYGIARADLTTGESRVSLVSEQDDLFHELASSSIKEVVLSPGWTEEDAHRLRQSLSVTLSEEEAEDLPKGYESLCENVEQPKLLRAFGRLLQYLLRTQKRSLEHLQPVQYDPPNEVMKIDLHSRRNLELVETLREKKKKGSLLWAVDETVTAMGGRLLKQWVERPLLSKKEIERRQGLVQSFLDHYFEREELRDELRHVYDLERLVGKVAYGNVNARELVQLRKSLQRIPAIFALVEKIGNQDVNERLQTIDRCESLVDLLEHSLVDDPPVSIKEGGMIRDGFHKELDTYRDASRNGKSWIAELEQKEREATGIKSLKIGYNKVFGYYIEVTKANIHLLEEGRYERKQTLTNAERYVTPELKEKEALILNAEESIVQLEYDLFLQVREQVKDYIRPLQALAQMISELDVIQGFATVSETHHYVRPALQEDRAIAIKGGRHPVVERVIPNGEYVANDVDMKDGRSILLITGPNMAGKSTYMRQLALIAIMGQIGCFVPADEARLPIFDQVFTRIGAADDLASGQSTFMVEMLETKYALQKATQNSLILLDEIGRGTSTYDGMALAQAIIEYIHDEIRAKTLFSTHYHELTALEKELSDVKNVHVSAVEEQGTVVFLHKVVDGQADRSYGIYVAELAGLPNVVTERAETLLAELEGEKEIVASEKEVASTNEPTQLSLFEPEPLEAYKPKGNKQPLSDEEKTVLHDLQSVDVLNTTPLEAIRLLNQWQQKLR.

605-612 (GPNMAGKS) serves as a coordination point for ATP. Residues 814 to 833 (PEPLEAYKPKGNKQPLSDEE) form a disordered region.

This sequence belongs to the DNA mismatch repair MutS family.

Its function is as follows. This protein is involved in the repair of mismatches in DNA. It is possible that it carries out the mismatch recognition step. This protein has a weak ATPase activity. The protein is DNA mismatch repair protein MutS of Halalkalibacterium halodurans (strain ATCC BAA-125 / DSM 18197 / FERM 7344 / JCM 9153 / C-125) (Bacillus halodurans).